A 251-amino-acid polypeptide reads, in one-letter code: MTQLPELGLRSPNNKSPTGPHPLEHLLARLLKRRRRSTLMSSPRSLLCSISGPGSHLLSTHPILCHSVYQPPQPASRPQAKRYQGLLPVPLAPHPLCLSGQLYLPNIPCTVIDGCGPVISHLKLTMYPWGLPPSHLGSSSPFSANMEQWDYYKSQTRFAPFLPESFCGSPLPSEQSSRPFGLAFKVLCAATCQPPQFQLLWLCPYKLDLHQRICLPPNLALVLLGALWTSPPPGSFLQPPYNRPYKLYKTN.

Positions 1 to 22 (MTQLPELGLRSPNNKSPTGPHP) are disordered.

This is an uncharacterized protein from Homo sapiens (Human).